We begin with the raw amino-acid sequence, 103 residues long: Pyrimidine/purine nucleoside phosphorylase (103 aa).

This sequence belongs to the nucleoside phosphorylase PpnP family.

It catalyses the reaction a purine D-ribonucleoside + phosphate = a purine nucleobase + alpha-D-ribose 1-phosphate. The catalysed reaction is adenosine + phosphate = alpha-D-ribose 1-phosphate + adenine. It carries out the reaction cytidine + phosphate = cytosine + alpha-D-ribose 1-phosphate. The enzyme catalyses guanosine + phosphate = alpha-D-ribose 1-phosphate + guanine. It catalyses the reaction inosine + phosphate = alpha-D-ribose 1-phosphate + hypoxanthine. The catalysed reaction is thymidine + phosphate = 2-deoxy-alpha-D-ribose 1-phosphate + thymine. It carries out the reaction uridine + phosphate = alpha-D-ribose 1-phosphate + uracil. The enzyme catalyses xanthosine + phosphate = alpha-D-ribose 1-phosphate + xanthine. Functionally, catalyzes the phosphorolysis of diverse nucleosides, yielding D-ribose 1-phosphate and the respective free bases. Can use uridine, adenosine, guanosine, cytidine, thymidine, inosine and xanthosine as substrates. Also catalyzes the reverse reactions. In Nocardia farcinica (strain IFM 10152), this protein is Pyrimidine/purine nucleoside phosphorylase.